Here is a 370-residue protein sequence, read N- to C-terminus: 3-isopropylmalate dehydrogenase (370 aa).

Position 77-90 (77-90 (GPKWDSVPYEVRPE)) interacts with NAD(+). Positions 97, 107, 135, and 226 each coordinate substrate. The Mg(2+) site is built by D226, D250, and D254. 290-302 (GSAPDIAGQGLAN) lines the NAD(+) pocket.

This sequence belongs to the isocitrate and isopropylmalate dehydrogenases family. LeuB type 1 subfamily. Homodimer. The cofactor is Mg(2+). Mn(2+) serves as cofactor.

Its subcellular location is the cytoplasm. The catalysed reaction is (2R,3S)-3-isopropylmalate + NAD(+) = 4-methyl-2-oxopentanoate + CO2 + NADH. It functions in the pathway amino-acid biosynthesis; L-leucine biosynthesis; L-leucine from 3-methyl-2-oxobutanoate: step 3/4. In terms of biological role, catalyzes the oxidation of 3-carboxy-2-hydroxy-4-methylpentanoate (3-isopropylmalate) to 3-carboxy-4-methyl-2-oxopentanoate. The product decarboxylates to 4-methyl-2 oxopentanoate. In Nitrobacter winogradskyi (strain ATCC 25391 / DSM 10237 / CIP 104748 / NCIMB 11846 / Nb-255), this protein is 3-isopropylmalate dehydrogenase.